A 391-amino-acid chain; its full sequence is Nucleosome assembly protein 1-like 1 (391 aa).

Residues 1-10 (MADIDNKEQS) are compositionally biased toward basic and acidic residues. The segment at 1–32 (MADIDNKEQSELDQDLDDVEEVEEEETGEETK) is disordered. Residue alanine 2 is modified to N-acetylalanine. At serine 10 the chain carries Phosphoserine. Residues 11-28 (ELDQDLDDVEEVEEEETG) are compositionally biased toward acidic residues. 2 positions are modified to phosphothreonine: threonine 62 and threonine 64. Serine 69 bears the Phosphoserine mark. At lysine 116 the chain carries N6-acetyllysine. An NAP1L motif motif is present at residues 125–150 (YEPTEEECEWKPDEEDEISEELKEKA). The segment covering 132 to 143 (CEWKPDEEDEIS) has biased composition (acidic residues). A disordered region spans residues 132–163 (CEWKPDEEDEISEELKEKAKIEDEKKDEEKED). A Phosphoserine modification is found at serine 143. Basic and acidic residues predominate over residues 144–163 (EELKEKAKIEDEKKDEEKED). The Nuclear localization signal motif lies at 273 to 279 (IKKKQKH). Residues 346–376 (AIEDDDDDYDEEGEEADEEGEEEGDEENDPD) are compositionally biased toward acidic residues. A disordered region spans residues 346–391 (AIEDDDDDYDEEGEEADEEGEEEGDEENDPDYDPKKDQNPAECKQQ). 2 positions are modified to 5-glutamyl polyglycine: glutamate 359 and glutamate 360. Basic and acidic residues predominate over residues 377 to 391 (YDPKKDQNPAECKQQ). Cysteine 388 bears the Cysteine methyl ester mark. Cysteine 388 carries S-farnesyl cysteine lipidation. Positions 389–391 (KQQ) are cleaved as a propeptide — removed in mature form.

Belongs to the nucleosome assembly protein (NAP) family. In terms of assembly, homodimer. The dimer binds strongly and sequentially to single and double H2A-H2B heterodimers. Interacts with ERCC6; this interaction increases ERCC6 processivity. Interacts with RAD54. Interacts with SETD1A. Post-translationally, polyglycylated by TTLL10 on glutamate residues, resulting in polyglycine chains on the gamma-carboxyl group. Both polyglutamylation and polyglycylation modifications can coexist on the same protein on adjacent residues, and lowering polyglycylation levels increases polyglutamylation, and reciprocally. Polyglutamylated by TTLL4 on glutamate residues, resulting in polyglutamate chains on the gamma-carboxyl group. Both polyglutamylation and polyglycylation modifications can coexist on the same protein on adjacent residues, and lowering polyglycylation levels increases polyglutamylation, and reciprocally.

The protein localises to the nucleus. It is found in the melanosome. It localises to the cytoplasm. In terms of biological role, histone chaperone that plays a role in the nuclear import of H2A-H2B and nucleosome assembly. Also participates in several important DNA repair mechanisms: greatly enhances ERCC6-mediated chromatin remodeling which is essential for transcription-coupled nucleotide excision DNA repair. Also stimulates homologous recombination (HR) by RAD51 and RAD54 which is essential in mitotic DNA double strand break (DSB) repair. Plays a key role in the regulation of embryonic neurogenesis. Promotes the proliferation of neural progenitors and inhibits neuronal differentiation during cortical development. Regulates neurogenesis via the modulation of RASSF10; regulates RASSF10 expression by promoting SETD1A-mediated H3K4 methylation at the RASSF10 promoter. The sequence is that of Nucleosome assembly protein 1-like 1 (NAP1L1) from Pongo abelii (Sumatran orangutan).